The primary structure comprises 258 residues: RIO-type serine/threonine-protein kinase Rio1 (258 aa).

The Protein kinase domain maps to 49–258 (TAMGGVISTG…EEMLKEVKGE (210 aa)). Residues 55-63 (ISTGKEANV) and lysine 80 contribute to the ATP site. Phosphoserine; by autocatalysis is present on serine 108. Residues glutamate 148 and isoleucine 150 each coordinate ATP. Aspartate 196 functions as the Proton acceptor in the catalytic mechanism. Tyrosine 200, asparagine 201, and aspartate 212 together coordinate ATP. Residues asparagine 201 and aspartate 212 each coordinate Mg(2+). The active-site 4-aspartylphosphate intermediate is aspartate 212.

Belongs to the protein kinase superfamily. RIO-type Ser/Thr kinase family. Mg(2+) serves as cofactor.

It carries out the reaction L-seryl-[protein] + ATP = O-phospho-L-seryl-[protein] + ADP + H(+). The catalysed reaction is L-threonyl-[protein] + ATP = O-phospho-L-threonyl-[protein] + ADP + H(+). Functionally, autophosphorylation of the rio1 protein is not necessary for maintenance of kinase activity. Prefers ATP over GTP. The yeast ortholog is involved in ribosome biogenesis. Despite the protein kinase domain is proposed to act predominantly as an ATPase. The protein is RIO-type serine/threonine-protein kinase Rio1 (rio1) of Archaeoglobus fulgidus (strain ATCC 49558 / DSM 4304 / JCM 9628 / NBRC 100126 / VC-16).